The following is a 152-amino-acid chain: SsrA-binding protein (152 aa).

This sequence belongs to the SmpB family.

The protein resides in the cytoplasm. Functionally, required for rescue of stalled ribosomes mediated by trans-translation. Binds to transfer-messenger RNA (tmRNA), required for stable association of tmRNA with ribosomes. tmRNA and SmpB together mimic tRNA shape, replacing the anticodon stem-loop with SmpB. tmRNA is encoded by the ssrA gene; the 2 termini fold to resemble tRNA(Ala) and it encodes a 'tag peptide', a short internal open reading frame. During trans-translation Ala-aminoacylated tmRNA acts like a tRNA, entering the A-site of stalled ribosomes, displacing the stalled mRNA. The ribosome then switches to translate the ORF on the tmRNA; the nascent peptide is terminated with the 'tag peptide' encoded by the tmRNA and targeted for degradation. The ribosome is freed to recommence translation, which seems to be the essential function of trans-translation. The polypeptide is SsrA-binding protein (Rickettsia prowazekii (strain Madrid E)).